The sequence spans 529 residues: Inosine-5'-monophosphate dehydrogenase (529 aa).

CBS domains follow at residues 129-185 (MVTD…SKQV) and 189-246 (MTKA…PLAT). NAD(+) contacts are provided by residues D283 and 334-336 (GVG). K(+) is bound by residues G336 and G338. IMP is bound at residue S339. Residue C341 participates in K(+) binding. Catalysis depends on C341, which acts as the Thioimidate intermediate. IMP is bound by residues 374-376 (DGG), 397-398 (GS), and 421-425 (YRGMG). R443 functions as the Proton acceptor in the catalytic mechanism. E458 lines the IMP pocket. K(+) is bound by residues E511, S512, and H513.

This sequence belongs to the IMPDH/GMPR family. In terms of assembly, homotetramer. Requires K(+) as cofactor.

It carries out the reaction IMP + NAD(+) + H2O = XMP + NADH + H(+). It functions in the pathway purine metabolism; XMP biosynthesis via de novo pathway; XMP from IMP: step 1/1. Its activity is regulated as follows. Mycophenolic acid (MPA) is a non-competitive inhibitor that prevents formation of the closed enzyme conformation by binding to the same site as the amobile flap. In contrast, mizoribine monophosphate (MZP) is a competitive inhibitor that induces the closed conformation. MPA is a potent inhibitor of mammalian IMPDHs but a poor inhibitor of the bacterial enzymes. MZP is a more potent inhibitor of bacterial IMPDH. In terms of biological role, catalyzes the conversion of inosine 5'-phosphate (IMP) to xanthosine 5'-phosphate (XMP), the first committed and rate-limiting step in the de novo synthesis of guanine nucleotides, and therefore plays an important role in the regulation of cell growth. The sequence is that of Inosine-5'-monophosphate dehydrogenase from Mycobacterium bovis (strain ATCC BAA-935 / AF2122/97).